Here is a 652-residue protein sequence, read N- to C-terminus: Vacuolar fusion protein MON1 homolog A (652 aa).

The tract at residues 102 to 141 (MQRKRSSECLDGTLTPSDGQSMERAESPTPGMAQGMEPGA) is disordered. Phosphoserine is present on residues Ser-128 and Ser-153. Thr-158 is modified (phosphothreonine). Residues 158 to 185 (TESEDGAASGDSHKEGTRGPPPLPTDMR) form a disordered region. The residue at position 188 (Ser-188) is a Phosphoserine. A disordered region spans residues 211-245 (PGSSEDWLEPPGAVGRPATEPPREGTTEGDEEDAT).

It belongs to the MON1/SAND family. In terms of assembly, interacts with CCZ1. Found in a complex with RMC1, CCZ1, MON1A and MON1B. The MON1A-CCZ1B complex interacts with RIMOC1. The MON1A-CCZ1B complex interacts with RAB7A and this interaction is enhanced in the presence of RIMOC1.

Its function is as follows. Plays an important role in membrane trafficking through the secretory apparatus. Not involved in endocytic trafficking to lysosomes. Acts in concert with CCZ1, as a guanine exchange factor (GEF) for RAB7, promotes the exchange of GDP to GTP, converting it from an inactive GDP-bound form into an active GTP-bound form. The protein is Vacuolar fusion protein MON1 homolog A (MON1A) of Homo sapiens (Human).